The sequence spans 257 residues: Protein orai-2 (257 aa).

Helical transmembrane passes span 62-79 (ASSR…VAMV), 94-114 (LIAF…ALLI), 156-176 (LGIL…FLPI), and 201-221 (LVST…TIHF).

This sequence belongs to the Orai family.

Its subcellular location is the membrane. In terms of biological role, ca(2+) release-activated Ca(2+)-like (CRAC-like) channel subunit which mediates Ca(2+) influx and increase in Ca(2+)-selective current by synergy with the Ca(2+) sensor, stim1. This Xenopus laevis (African clawed frog) protein is Protein orai-2 (orai2).